Consider the following 296-residue polypeptide: uncharacterized protein (296 aa).

This sequence to Synechocystis PCC 6803 sll0787 and M.jannaschii MJ0640.

This is an uncharacterized protein from Methanocaldococcus jannaschii (strain ATCC 43067 / DSM 2661 / JAL-1 / JCM 10045 / NBRC 100440) (Methanococcus jannaschii).